Here is a 227-residue protein sequence, read N- to C-terminus: Protein SSO0193 (227 aa).

Residues 15–209 (EIGRLLIEIA…ETKPNGSDII (195 aa)) form the AMMECR1 domain.

The sequence is that of Protein SSO0193 from Saccharolobus solfataricus (strain ATCC 35092 / DSM 1617 / JCM 11322 / P2) (Sulfolobus solfataricus).